A 353-amino-acid chain; its full sequence is Dihydroorotate dehydrogenase (quinone) (353 aa).

FMN is bound by residues 67–71 (AGFDK) and Thr91. Position 71 (Lys71) interacts with substrate. 116 to 120 (NRMGF) is a binding site for substrate. FMN-binding residues include Asn144 and Asn177. A substrate-binding site is contributed by Asn177. Catalysis depends on Ser180, which acts as the Nucleophile. Asn182 contributes to the substrate binding site. FMN is bound by residues Lys213 and Thr241. 242–243 (NT) serves as a coordination point for substrate. FMN contacts are provided by residues Gly265, Gly294, and 315-316 (YT).

Belongs to the dihydroorotate dehydrogenase family. Type 2 subfamily. As to quaternary structure, monomer. FMN serves as cofactor.

The protein localises to the cell membrane. The enzyme catalyses (S)-dihydroorotate + a quinone = orotate + a quinol. It participates in pyrimidine metabolism; UMP biosynthesis via de novo pathway; orotate from (S)-dihydroorotate (quinone route): step 1/1. Its function is as follows. Catalyzes the conversion of dihydroorotate to orotate with quinone as electron acceptor. The chain is Dihydroorotate dehydrogenase (quinone) from Mycobacteroides abscessus (strain ATCC 19977 / DSM 44196 / CCUG 20993 / CIP 104536 / JCM 13569 / NCTC 13031 / TMC 1543 / L948) (Mycobacterium abscessus).